The sequence spans 598 residues: NADH-quinone oxidoreductase subunit C/D (598 aa).

An NADH dehydrogenase I subunit C region spans residues 1-189 (MTDSTTHDRE…DPFELTRQKQ (189 aa)). The NADH dehydrogenase I subunit D stretch occupies residues 213-598 (DFMFLNLGPN…IDFVMSDVDR (386 aa)).

The protein in the N-terminal section; belongs to the complex I 30 kDa subunit family. This sequence in the C-terminal section; belongs to the complex I 49 kDa subunit family. NDH-1 is composed of 13 different subunits. Subunits NuoB, CD, E, F, and G constitute the peripheral sector of the complex.

It localises to the cell inner membrane. It catalyses the reaction a quinone + NADH + 5 H(+)(in) = a quinol + NAD(+) + 4 H(+)(out). NDH-1 shuttles electrons from NADH, via FMN and iron-sulfur (Fe-S) centers, to quinones in the respiratory chain. The immediate electron acceptor for the enzyme in this species is believed to be ubiquinone. Couples the redox reaction to proton translocation (for every two electrons transferred, four hydrogen ions are translocated across the cytoplasmic membrane), and thus conserves the redox energy in a proton gradient. In Edwardsiella ictaluri (strain 93-146), this protein is NADH-quinone oxidoreductase subunit C/D.